A 66-amino-acid polypeptide reads, in one-letter code: Hirudin-PA (66 aa).

The tract at residues 1-3 (ITY) is interaction with thrombin active site. 3 cysteine pairs are disulfide-bonded: cysteine 6–cysteine 14, cysteine 16–cysteine 28, and cysteine 22–cysteine 39. The disordered stretch occupies residues 39-66 (CVTGEGTPKPQSHNQGDFEPIPEDAYDE). O-linked (GalNAc...) threonine glycosylation occurs at threonine 45. The interval 55 to 66 (DFEPIPEDAYDE) is interaction with fibrinogen-binding exosite of thrombin. A Sulfotyrosine modification is found at tyrosine 64.

It belongs to the protease inhibitor I14 (hirudin) family.

It is found in the secreted. Functionally, hirudin is a potent thrombin-specific protease inhibitor. It forms a stable non-covalent complex with alpha-thrombin, thereby abolishing its ability to cleave fibrinogen. The sequence is that of Hirudin-PA from Hirudo medicinalis (Medicinal leech).